A 117-amino-acid chain; its full sequence is Prefoldin subunit beta (117 aa).

Belongs to the prefoldin subunit beta family. In terms of assembly, heterohexamer of two alpha and four beta subunits.

Its subcellular location is the cytoplasm. Functionally, molecular chaperone capable of stabilizing a range of proteins. Seems to fulfill an ATP-independent, HSP70-like function in archaeal de novo protein folding. This chain is Prefoldin subunit beta, found in Methanococcoides burtonii (strain DSM 6242 / NBRC 107633 / OCM 468 / ACE-M).